A 409-amino-acid chain; its full sequence is Failed axon connections homolog (409 aa).

Residues 68–88 (YLTGGALLAAAAYLLHELLVI) form a helical membrane-spanning segment. The disordered stretch occupies residues 372–409 (DEGAENSFSRTPDTDFTGHSLFDSDVDMDDYTEHEQCK).

The protein belongs to the FAX family.

It localises to the membrane. May play a role in axonal development. In Rattus norvegicus (Rat), this protein is Failed axon connections homolog (Faxc).